A 28-amino-acid polypeptide reads, in one-letter code: Cruzioseptin-3 (28 aa).

The residue at position 25 (Gln-25) is a Glutamine amide. The propeptide occupies 27-28 (EQ).

In terms of tissue distribution, expressed by the skin glands.

The protein localises to the secreted. Functionally, has antimicrobial activity against Gram-negative bacterium E.coli (MIC=13.32 uM), against Gram-positive bacterium S.aureus (MIC=13.32 uM) and against fungus C.albicans (MIC=13.32 uM). At higher concentrations also has a bactericidal and fungicidal effect. Has hemagglutinating activity against horse erythrocytes. This Cruziohyla calcarifer (Splendid leaf frog) protein is Cruzioseptin-3.